A 206-amino-acid chain; its full sequence is Alpha-amylase/trypsin inhibitor (206 aa).

Intrachain disulfides connect Cys9–Cys205, Cys51–Cys61, Cys66–Cys72, Cys118–Cys194, Cys124–Cys177, Cys132–Cys142, Cys146–Cys155, and Cys156–Cys164.

It belongs to the thaumatin family.

In terms of biological role, inhibits both trypsin and alpha-amylase. Inhibits the growth of some plant fungal pathogens. This is Alpha-amylase/trypsin inhibitor from Zea mays (Maize).